The chain runs to 332 residues: Glyceraldehyde-3-phosphate dehydrogenase 1 (332 aa).

NAD(+)-binding positions include 11–12 (RI), D33, and R78. D-glyceraldehyde 3-phosphate contacts are provided by residues 149 to 151 (SCT), T180, 209 to 210 (TG), and R232. C150 acts as the Nucleophile in catalysis. NAD(+) is bound at residue N314.

It belongs to the glyceraldehyde-3-phosphate dehydrogenase family. Homotetramer.

It is found in the cytoplasm. The catalysed reaction is D-glyceraldehyde 3-phosphate + phosphate + NAD(+) = (2R)-3-phospho-glyceroyl phosphate + NADH + H(+). Its pathway is carbohydrate degradation; glycolysis; pyruvate from D-glyceraldehyde 3-phosphate: step 1/5. This is Glyceraldehyde-3-phosphate dehydrogenase 1 (GPD1) from Candida glabrata (strain ATCC 2001 / BCRC 20586 / JCM 3761 / NBRC 0622 / NRRL Y-65 / CBS 138) (Yeast).